The sequence spans 361 residues: Polyribonucleotide 5'-hydroxyl-kinase PH0197 (361 aa).

43 to 50 (GDVDTGKT) is a binding site for ATP.

It depends on a divalent metal cation as a cofactor.

The catalysed reaction is a 5'-end dephospho-2'-deoxyribonucleoside-DNA + ATP = a 5'-end 5'-phospho-2'-deoxyribonucleoside-DNA + ADP + H(+). It carries out the reaction a 5'-end dephospho-ribonucleoside-RNA + ATP = a 5'-end 5'-phospho-ribonucleoside-RNA + ADP + H(+). With respect to regulation, DNA kinase activity is inhibited by 250 mM sodium chloride whereas RNA kinase activity is unaffected. In terms of biological role, polynucleotide kinase that can phosphorylate the 5'-hydroxyl groups of both single-stranded RNA (ssRNA) and single-stranded DNA (ssDNA). Exhibits a strong preference for ssRNA. The chain is Polyribonucleotide 5'-hydroxyl-kinase PH0197 from Pyrococcus horikoshii (strain ATCC 700860 / DSM 12428 / JCM 9974 / NBRC 100139 / OT-3).